Reading from the N-terminus, the 218-residue chain is Methylthioribulose-1-phosphate dehydratase (218 aa).

Zn(2+) is bound by residues H107 and H109.

This sequence belongs to the aldolase class II family. MtnB subfamily. Zn(2+) is required as a cofactor.

The enzyme catalyses 5-(methylsulfanyl)-D-ribulose 1-phosphate = 5-methylsulfanyl-2,3-dioxopentyl phosphate + H2O. Its pathway is amino-acid biosynthesis; L-methionine biosynthesis via salvage pathway; L-methionine from S-methyl-5-thio-alpha-D-ribose 1-phosphate: step 2/6. Its function is as follows. Catalyzes the dehydration of methylthioribulose-1-phosphate (MTRu-1-P) into 2,3-diketo-5-methylthiopentyl-1-phosphate (DK-MTP-1-P). The polypeptide is Methylthioribulose-1-phosphate dehydratase (Xylella fastidiosa (strain Temecula1 / ATCC 700964)).